The chain runs to 141 residues: MFSCFKFISTPSLVKSTSQLLSRPLSAVVLKRPEILTDESLSSLAVSRPLTSLVSSRNFQTSAISRDIDTAAKFIGAGAATVGVAGSGAGIGTVFGSLIIGYARNPSLKQQLFSYAILGFALSEAMGLFCLMVAFLILFAM.

The transit peptide at 1–66 (MFSCFKFIST…RNFQTSAISR (66 aa)) directs the protein to the mitochondrion. Residues 82 to 102 (VGVAGSGAGIGTVFGSLIIGY) form a helical membrane-spanning segment. N6,N6,N6-trimethyllysine is present on Lys109. A helical transmembrane segment spans residues 117–137 (ILGFALSEAMGLFCLMVAFLI).

This sequence belongs to the ATPase C chain family. In terms of assembly, F-type ATPases have 2 components, CF(1) - the catalytic core - and CF(0) - the membrane proton channel. CF(1) has five subunits: alpha(3), beta(3), gamma(1), delta(1), epsilon(1). CF(0) has three main subunits: a, b and c. Interacts with DNAJC30; interaction is direct. In terms of processing, trimethylated by ATPSCKMT at Lys-109. Methylation is required for proper incorporation of the C subunit into the ATP synthase complex and mitochondrial respiration.

The protein localises to the mitochondrion membrane. Mitochondrial membrane ATP synthase (F(1)F(0) ATP synthase or Complex V) produces ATP from ADP in the presence of a proton gradient across the membrane which is generated by electron transport complexes of the respiratory chain. F-type ATPases consist of two structural domains, F(1) - containing the extramembraneous catalytic core and F(0) - containing the membrane proton channel, linked together by a central stalk and a peripheral stalk. During catalysis, ATP synthesis in the catalytic domain of F(1) is coupled via a rotary mechanism of the central stalk subunits to proton translocation. Part of the complex F(0) domain. A homomeric c-ring of probably 10 subunits is part of the complex rotary element. This chain is ATP synthase F(0) complex subunit C2, mitochondrial, found in Pongo abelii (Sumatran orangutan).